Here is a 391-residue protein sequence, read N- to C-terminus: Response regulator aspartate phosphatase I (391 aa).

6 TPR repeats span residues Leu-62–Gly-95, Ser-150–Thr-183, Val-184–Ser-217, Ala-224–Ser-257, Lys-275–Leu-311, and Glu-338–Ile-371.

This sequence belongs to the Rap family.

Its subcellular location is the cytoplasm. Inhibited by PhrI. Activates ICEBs1 gene expression, excision and transfer by inactivating the ICEBs1 repressor protein ImmR. RapI-mediated induction likely results from an increase in the specific activity of the protease ImmA, which mediates proteolysis of ImmR. In addition, is involved in regulation of sporulation. Acts as a phosphatase that specifically dephosphorylates the sporulation initiation phosphotransferase Spo0F and inhibits its activity. The sequence is that of Response regulator aspartate phosphatase I (rapI) from Bacillus subtilis (strain 168).